The primary structure comprises 345 residues: Phosphoribosylformylglycinamidine cyclo-ligase (345 aa).

This sequence belongs to the AIR synthase family.

The protein resides in the cytoplasm. The enzyme catalyses 2-formamido-N(1)-(5-O-phospho-beta-D-ribosyl)acetamidine + ATP = 5-amino-1-(5-phospho-beta-D-ribosyl)imidazole + ADP + phosphate + H(+). It participates in purine metabolism; IMP biosynthesis via de novo pathway; 5-amino-1-(5-phospho-D-ribosyl)imidazole from N(2)-formyl-N(1)-(5-phospho-D-ribosyl)glycinamide: step 2/2. The chain is Phosphoribosylformylglycinamidine cyclo-ligase from Shewanella loihica (strain ATCC BAA-1088 / PV-4).